The sequence spans 433 residues: Hps1-dma1 cluster O-methyltransferase (433 aa).

Positions 36 to 55 (NGHPERSLNSTDSVRLSDAP) are disordered. Asp285 is a binding site for S-adenosyl-L-methionine. Residue His331 is the Proton acceptor of the active site.

The protein belongs to the class I-like SAM-binding methyltransferase superfamily. Cation-independent O-methyltransferase family. COMT subfamily.

The protein operates within secondary metabolite biosynthesis. Its function is as follows. O-methyltransferase; part of the hps1-dma1 gene cluster that probably mediates the biosynthesis a derivative of cyclopiazonic acid (CPA). The hybrid polyketide synthase-nonribosomal peptide synthetase (PKS-NRPS) nps1 might incorporates acetyl-CoA, malonyl-CoA, and tryptophan (Trp) and utilizes a C-terminal redox-incompetent reductase domain to make and release the tryptophan tetramic acid, cyclo-acetoacetyl-L-tryptophan (c-AATrp), as the first intermediate in the pathway. In addition, the cluster also includes the tryptophan dimethylallyltransferase dma1, the FAD-dependent oxidoreductase toxD, the cytochrome P450 monooxygenase cyp3.1 and the methyltransferase DOTSEDRAFT_139328; the latter 2 being not present in all CPA-producing fungi but involved in additional modifications that occur in biosynthesis the of a range of CPA and CPA-like products. Further studies are required to clarify whether the CPA-like hps1-dma1 cluster is functional or a non-functional relic reflecting evolution of D.septosporum. This is Hps1-dma1 cluster O-methyltransferase from Dothistroma septosporum (strain NZE10 / CBS 128990) (Red band needle blight fungus).